The primary structure comprises 505 residues: MAQVINTNSLSLLTQNNLNKSQSSLSSAIERLSSGLRINSAKDDAAGQAIANRFTSNIKGLTQASRNANDGISIAQTTEGALNEINNNLQRVRELSVQATNGTNSDSDLKSIQDEIQQRLEEIDRVSNQTQFNGVKVLSQDNQMKIQVGANDGETITIDLQKIDVKSLGLDGFNVNGPKEATVGDLKSSFKNVTGYDTYAAGADKYRVDINSGAVVTDAAAPDKVYVNAANGQLTTDDAENNTAVNLFKTTKSTAGTDEAKAIAGAIKGGKEGDTFDYKGVSFTIDTKAGNDGNGTVSTTINGEKVTLTVADITAGAANVNDATLQSSKNVYTSVVNGQFTFDDKTKNESAKLSDLEANNAVKGESKITVNGAEYTANAAGDKVTLAGKTMFIDKTASGVSTLINEDAAAAKKSTANPLASIDSALSKVDAVRSSLGAIQNRFDSAITNLGNTVTNLNSARSRIEDADYATEVSNMSKAQILQQAGTSVLAQANQVPQNVLSLLR.

Belongs to the bacterial flagellin family.

The protein resides in the secreted. It localises to the bacterial flagellum. Its function is as follows. Flagellin is the subunit protein which polymerizes to form the filaments of bacterial flagella. This Salmonella budapest protein is Flagellin (fliC).